We begin with the raw amino-acid sequence, 315 residues long: Diacylglycerol kinase (315 aa).

In terms of domain architecture, DAGKc spans 1–132 (MRKRARIIYN…VDIGKMNNRY (132 aa)). ATP is bound by residues 10–14 (NPTSG), threonine 41, 67–73 (GDGTLNE), and threonine 94. Mg(2+)-binding residues include lysine 213, aspartate 216, and tyrosine 218. The active-site Proton acceptor is glutamate 273.

Belongs to the diacylglycerol/lipid kinase family. Homodimer. Mg(2+) serves as cofactor.

It catalyses the reaction a 1,2-diacyl-sn-glycerol + ATP = a 1,2-diacyl-sn-glycero-3-phosphate + ADP + H(+). Its function is as follows. Catalyzes the phosphorylation of diacylglycerol (DAG) into phosphatidic acid. Is a key enzyme involved in the production of lipoteichoic acid by reintroducing DAG formed from the breakdown of membrane phospholipids into the phosphatidylglycerol biosynthetic pathway. This chain is Diacylglycerol kinase (dagK), found in Staphylococcus aureus (strain bovine RF122 / ET3-1).